Here is a 1707-residue protein sequence, read N- to C-terminus: Mediator of DNA damage checkpoint protein 1 (1707 aa).

The disordered stretch occupies residues Met1–Ser23. Residues Met1 to Thr150 are interaction with CHEK2. The tract at residues Glu2 to Thr222 is interaction with the MRN complex. Thr4 bears the Phosphothreonine mark. Over residues Trp9–Glu18 the composition is skewed to acidic residues. Residues Asn54–Arg105 enclose the FHA domain. Thr146 carries the phosphothreonine modification. The tract at residues Ala166–Val328 is disordered. 2 positions are modified to phosphoserine: Ser168 and Ser176. Residues Gly183–Ala192 are compositionally biased toward polar residues. Phosphoserine occurs at positions 198 and 220. Thr222 is subject to Phosphothreonine. Residues Ala252–Pro263 are compositionally biased toward polar residues. A compositionally biased stretch (basic and acidic residues) spans Thr264–Gly278. Ser298 carries the post-translational modification Phosphoserine. Phosphothreonine is present on Thr300. Residue Ser313 is modified to Phosphoserine. Thr315 is subject to Phosphothreonine. Residue Ser360 is modified to Phosphoserine. At Thr362 the chain carries Phosphothreonine. The segment covering Ala369–His378 has biased composition (basic and acidic residues). The interval Ala369 to Ser398 is disordered. Ser385 carries the phosphoserine modification. Residues Asp386–Val397 are compositionally biased toward acidic residues. Thr387 bears the Phosphothreonine mark. 5 positions are modified to phosphoserine: Ser398, Ser415, Ser425, Ser438, and Ser442. 4 disordered regions span residues Asp417 to His497, Pro520 to Cys642, Leu679 to Gly699, and Arg718 to Leu746. Positions Ser425 to Gly439 are enriched in polar residues. Thr444 is modified (phosphothreonine). Position 461 is a phosphoserine (Ser461). Phosphothreonine is present on Thr470. Phosphoserine occurs at positions 492, 493, 591, 593, and 595. The span at Val580–Ser595 shows a compositional bias: polar residues. The segment covering Gly626–Cys642 has biased composition (basic and acidic residues). The segment covering Glu719–His730 has biased composition (basic and acidic residues). Phosphoserine occurs at positions 735 and 750. The residue at position 769 (Lys769) is an N6-acetyllysine. 3 stretches are compositionally biased toward basic and acidic residues: residues Ala778–Ile804, Thr812–Glu868, and Thr875–Lys889. Disordered regions lie at residues Ala778 to Pro899 and Ile914 to Ala1510. Ser885, Ser929, and Ser962 each carry phosphoserine. Residues Ser968–Leu986 are compositionally biased toward low complexity. At Ser991 the chain carries Phosphoserine. Composition is skewed to polar residues over residues Pro1026–Thr1056, Gln1068–Thr1086, and Glu1101–Thr1113. A Phosphothreonine modification is found at Thr1056. 3 positions are modified to phosphoserine: Ser1104, Ser1126, and Ser1128. Phosphothreonine is present on residues Thr1132, Thr1173, and Thr1234. Composition is skewed to polar residues over residues Pro1225–Ala1241, Pro1265–Ala1281, Val1295–Lys1308, and Leu1317–Pro1326. Phosphothreonine is present on residues Thr1297 and Thr1298. Ser1327 is modified (phosphoserine). Over residues Pro1343–Gln1363 the composition is skewed to polar residues. The residue at position 1352 (Thr1352) is a Phosphothreonine. Ser1359 is subject to Phosphoserine. Residues Ser1364–Pro1376 are compositionally biased toward low complexity. A Phosphothreonine modification is found at Thr1375. The segment covering Leu1378–Ile1393 has biased composition (pro residues). A Glycyl lysine isopeptide (Lys-Gly) (interchain with G-Cter in SUMO2) cross-link involves residue Lys1418. Low complexity predominate over residues Ser1421 to Ala1441. Ser1435, Ser1436, Ser1439, and Ser1443 each carry phosphoserine. Positions Val1459–Pro1473 are enriched in basic and acidic residues. Lys1461 participates in a covalent cross-link: Glycyl lysine isopeptide (Lys-Gly) (interchain with G-Cter in SUMO1); alternate. Lys1461 is covalently cross-linked (Glycyl lysine isopeptide (Lys-Gly) (interchain with G-Cter in SUMO2); alternate). Thr1480 carries the phosphothreonine modification. A compositionally biased stretch (basic and acidic residues) spans Pro1481 to Thr1493. N6-acetyllysine is present on Lys1496. 2 consecutive BRCT domains span residues Ala1510 to Val1588 and Arg1609 to Ser1700.

As to quaternary structure, homodimer. Interacts with H2AX, which requires phosphorylation of H2AX on 'Ser-139'. Interacts with the MRN complex, composed of MRE11, RAD50, and NBN. Interacts with CHEK2, which requires ATM-mediated phosphorylation of 'Thr-68' within the FHA domain of CHEK2. Interacts constitutively with the BRCA1-BARD1 complex, SMC1A and TP53BP1. Interacts with ATM and FANCD2, and these interactions are reduced upon DNA damage. Also interacts with the PRKDC complex, composed of XRCC6/KU70, XRCC5/KU80 and PRKDC/XRCC7. This interaction may be required for PRKDC autophosphorylation, which is essential for DNA double strand break (DSB) repair. When phosphorylated by ATM, interacts with RNF8 (via FHA domain). Interacts with CEP164. When phosphorylated, interacts with APTX (via FHA-like domain). Interacts (when phosphorylated) with TOPBP1; promoting TOPBP1 localization to DNA damage sites during mitosis. Interacts (when phosphorylated) with NBN; promoting NBN and MRN complex localization to DNA damage sites. In terms of processing, phosphorylated upon exposure to ionizing radiation (IR), ultraviolet radiation (UV), and hydroxyurea (HU). Phosphorylation in response to IR requires ATM, NBN, and possibly CHEK2. Also phosphorylated during the G2/M phase of the cell cycle and during activation of the mitotic spindle checkpoint. Phosphorylation at Thr-4 by ATM stabilizes and enhances homodimerization via the FHA domain. Phosphorylated at Ser-168 and Ser-198 by CK2 in response to DNA damage during mitosis, promoting interaction with TOPBP1. Phosphorylated by CK2 in response to DNA damage, promoting interaction with NBN and recruitment of the MRN complex to DNA damage sites. Post-translationally, sumoylation at Lys-1461 by PIAS4 following DNA damage promotes ubiquitin-mediated degradation. Ubiquitinated by RNF4, leading to proteasomal degradation; undergoes 'Lys-48'-linked polyubiquitination.

The protein resides in the nucleus. It is found in the chromosome. Its function is as follows. Histone reader protein required for checkpoint-mediated cell cycle arrest in response to DNA damage within both the S phase and G2/M phases of the cell cycle. Specifically recognizes and binds histone H2AX phosphorylated at 'Ser-139', a marker of DNA damage, serving as a scaffold for the recruitment of DNA repair and signal transduction proteins to discrete foci of DNA damage sites. Also required for downstream events subsequent to the recruitment of these proteins. These include phosphorylation and activation of the ATM, CHEK1 and CHEK2 kinases, and stabilization of TP53/p53 and apoptosis. ATM and CHEK2 may also be activated independently by a parallel pathway mediated by TP53BP1. Required for chromosomal stability during mitosis by promoting recruitment of TOPBP1 to DNA double strand breaks (DSBs): TOPBP1 forms filamentous assemblies that bridge MDC1 and tether broken chromosomes during mitosis. Required for the repair of DSBs via homologous recombination by promoting recruitment of NBN component of the MRN complex to DSBs. The protein is Mediator of DNA damage checkpoint protein 1 (Mdc1) of Mus musculus (Mouse).